Consider the following 322-residue polypeptide: Mas-related G-protein coupled receptor member X3 (322 aa).

The Extracellular segment spans residues 1 to 31 (MDSTIPVLGTELTPINGREETPCYKQTLSFT). A helical transmembrane segment spans residues 32–52 (GLTCIVSLVALTGNAVVLWLL). Over 53-60 (GCRMRRNA) the chain is Cytoplasmic. Residues 61–81 (VSIYILNLVAADFLFLSGHII) traverse the membrane as a helical segment. Over 82-96 (CSPLRLINIRHPISK) the chain is Extracellular. A helical transmembrane segment spans residues 97-117 (ILSPVMTFPYFIGLSMLSAIS). Residues 118–140 (TERCLSILWPIWYHCRRPRYLSS) are Cytoplasmic-facing. A helical membrane pass occupies residues 141–161 (VMCVLLWALSLLRSILEWMFC). At 162–177 (DFLFSGANSVWCETSD) the chain is on the extracellular side. A helical membrane pass occupies residues 178–198 (FITIAWLVFLCVVLCGSSLVL). The Cytoplasmic portion of the chain corresponds to 199–213 (LVRILCGSRKMPLTR). A helical membrane pass occupies residues 214–234 (LYVTILLTVLVFLLCGLPFGI). Topologically, residues 235-254 (QWALFSRIHLDWKVLFCHVH) are extracellular. A helical membrane pass occupies residues 255-275 (LVSIFLSALNSSANPIIYFFV). Over 276 to 322 (GSFRQRQNRQNLKLVLQRALQDTPEVDEGGGWLPQETLELSGSRLEQ) the chain is Cytoplasmic.

Belongs to the G-protein coupled receptor 1 family. Mas subfamily. As to expression, uniquely localized in a subset of small dorsal root and trigeminal sensory neurons.

The protein resides in the cell membrane. Orphan receptor. Probably involved in the function of nociceptive neurons. May regulate nociceptor function and/or development, including the sensation or modulation of pain. Potently activated by enkephalins. The polypeptide is Mas-related G-protein coupled receptor member X3 (MRGPRX3) (Homo sapiens (Human)).